A 459-amino-acid chain; its full sequence is Mycothione reductase (459 aa).

Residue 31-39 (EQGTFGGTC) participates in FAD binding. The cysteines at positions 39 and 44 are disulfide-linked. His444 functions as the Proton acceptor in the catalytic mechanism.

It belongs to the class-I pyridine nucleotide-disulfide oxidoreductase family. As to quaternary structure, homodimer. It depends on FAD as a cofactor.

The enzyme catalyses 2 mycothiol + NADP(+) = mycothione + NADPH + H(+). It carries out the reaction 2 mycothiol + NAD(+) = mycothione + NADH + H(+). Functionally, catalyzes the NAD(P)H-dependent reduction of mycothione (the oxidized disulfide form of mycothiol) to mycothiol. The sequence is that of Mycothione reductase (mtr) from Mycobacterium tuberculosis (strain CDC 1551 / Oshkosh).